The sequence spans 1342 residues: DNA-directed RNA polymerase subunit beta (1342 aa).

2 positions are modified to N6-acetyllysine: Lys-1022 and Lys-1200.

Belongs to the RNA polymerase beta chain family. The RNAP catalytic core consists of 2 alpha, 1 beta, 1 beta' and 1 omega subunit. When a sigma factor is associated with the core the holoenzyme is formed, which can initiate transcription.

It carries out the reaction RNA(n) + a ribonucleoside 5'-triphosphate = RNA(n+1) + diphosphate. DNA-dependent RNA polymerase catalyzes the transcription of DNA into RNA using the four ribonucleoside triphosphates as substrates. The protein is DNA-directed RNA polymerase subunit beta of Escherichia fergusonii (strain ATCC 35469 / DSM 13698 / CCUG 18766 / IAM 14443 / JCM 21226 / LMG 7866 / NBRC 102419 / NCTC 12128 / CDC 0568-73).